Here is a 230-residue protein sequence, read N- to C-terminus: SPbeta prophage-derived putative HNH endonuclease YoqL (230 aa).

The HNH domain occupies cysteine 136 to aspartate 188.

This sequence belongs to the HNH nuclease family.

In Bacillus subtilis (strain 168), this protein is SPbeta prophage-derived putative HNH endonuclease YoqL (yoqL).